The following is a 299-amino-acid chain: Taste receptor type 2 member 4 (299 aa).

Over 1-9 the chain is Extracellular; sequence MLQLFYFSA. A helical membrane pass occupies residues 10–30; the sequence is IIASVILNFVGIIMNLFIMVV. Residues 31–46 lie on the Cytoplasmic side of the membrane; the sequence is NCKTWVKSHRISSSDR. The helical transmembrane segment at 47-67 threads the bilayer; that stretch reads ILFSLGITRFLMLGLFLVNTI. At 68–81 the chain is on the extracellular side; sequence FFVSSNTERSVYLS. Residues 82–102 traverse the membrane as a helical segment; that stretch reads AFFVLCFMFXDSSSLWFVTLL. Topologically, residues 103 to 131 are cytoplasmic; it reads NILYCVKITNFQHSVFLLLKQNISPKIPR. A helical membrane pass occupies residues 132–152; sequence LLLACVLISAFTTCLYITLSQ. Topologically, residues 153–172 are extracellular; that stretch reads ASPFPELVTKRNNTSFNTHE. 2 N-linked (GlcNAc...) asparagine glycosylation sites follow: asparagine 164 and asparagine 165. The chain crosses the membrane as a helical span at residues 173 to 193; it reads GILSLVVSLVLSSSLQFIINV. Topologically, residues 194 to 230 are cytoplasmic; it reads TSASLLIHSLRRHIQKMQKNATGFWNPQTEAHVGAMK. The helical transmembrane segment at 231-251 threads the bilayer; that stretch reads LMIYFLILYIPYSVATLVQYL. Residues 252-262 lie on the Extracellular side of the membrane; the sequence is PFYVGMDMGTK. Residues 263–283 traverse the membrane as a helical segment; it reads AICLIFATLYSPGHSVLIIIT. Topologically, residues 284-299 are cytoplasmic; the sequence is HPKLKTTAKKILCFKK.

It belongs to the G-protein coupled receptor T2R family.

Its subcellular location is the membrane. It localises to the cell projection. The protein resides in the cilium membrane. Gustducin-coupled receptor implicated in the perception of bitter compounds in the oral cavity and the gastrointestinal tract. Signals through PLCB2 and the calcium-regulated cation channel TRPM5. In airway epithelial cells, binding of denatonium increases the intracellular calcium ion concentration and stimulates ciliary beat frequency. In Pongo pygmaeus (Bornean orangutan), this protein is Taste receptor type 2 member 4 (TAS2R4).